A 116-amino-acid chain; its full sequence is Large ribosomal subunit protein bL17 (116 aa).

The protein belongs to the bacterial ribosomal protein bL17 family. As to quaternary structure, part of the 50S ribosomal subunit. Contacts protein L32.

The polypeptide is Large ribosomal subunit protein bL17 (Chloroflexus aurantiacus (strain ATCC 29366 / DSM 635 / J-10-fl)).